Here is a 132-residue protein sequence, read N- to C-terminus: NADPH-dependent 7-cyano-7-deazaguanine reductase (132 aa).

The active-site Thioimide intermediate is the Cys34. Catalysis depends on Asp41, which acts as the Proton donor. Substrate is bound by residues 56-58 (IEL) and 75-76 (HE).

This sequence belongs to the GTP cyclohydrolase I family. QueF type 1 subfamily.

It localises to the cytoplasm. The catalysed reaction is 7-aminomethyl-7-carbaguanine + 2 NADP(+) = 7-cyano-7-deazaguanine + 2 NADPH + 3 H(+). Its pathway is tRNA modification; tRNA-queuosine biosynthesis. Catalyzes the NADPH-dependent reduction of 7-cyano-7-deazaguanine (preQ0) to 7-aminomethyl-7-deazaguanine (preQ1). The protein is NADPH-dependent 7-cyano-7-deazaguanine reductase of Vesicomyosocius okutanii subsp. Calyptogena okutanii (strain HA).